Reading from the N-terminus, the 1347-residue chain is BTB/POZ domain-containing protein 1 (1347 aa).

2 ANK repeats span residues 51 to 81 and 86 to 115; these read YGRTVLHIAVSENKNSFVRSLLQHKGIDVFV and SGYTALHRAIYVGNLEAASLLLSKDPSFRS. RCC1 repeat units lie at residues 148–198, 215–264, 265–322, and 324–372; these read GNEL…DKIL, SQNV…ALTK, FGSI…AWTD, and DIYS…CLLQ. BTB domains are found at residues 619 to 698 and 758 to 829; these read SDVT…LSPW and MDTV…VELF. 4 disordered regions span residues 1006-1029, 1104-1139, 1193-1237, and 1286-1347; these read SSNQSDSLNKEDAEEKSPKPNVVN, EKADASTTTVLSDSRFMKAPTKKSQREKKKELSKQV, EGSS…PLSI, and GILK…RAVK. The segment covering 1013–1023 has biased composition (basic and acidic residues); it reads LNKEDAEEKSP. Composition is skewed to polar residues over residues 1208–1237 and 1297–1306; these read SNGSPTSWNLLTKPSPRSASLPKNSQPLSI and NRKQGQASKQ. Residues 1336–1347 are compositionally biased toward basic residues; sequence TTHKKGKARAVK.

In terms of assembly, interacts with cul3.

Its pathway is protein modification; protein ubiquitination. Its function is as follows. Probable substrate-specific adapter of an E3 ubiquitin-protein ligase complex which mediates the ubiquitination and subsequent proteasomal degradation of target proteins. The polypeptide is BTB/POZ domain-containing protein 1 (btb1) (Schizosaccharomyces pombe (strain 972 / ATCC 24843) (Fission yeast)).